We begin with the raw amino-acid sequence, 597 residues long: MRTQYCGHLNKSLEGQTVELCGWVNRRRDLGGLIFIDMRDREGIVQVVVDPDMKDVFELANQLRNEFCIRLIGEVRVRPESQVNKKMATGEVEILATGLEIINRSDVLPLDFNQNNSEEQRLKFRYLDLRRPEMSDRIKLRAKASSFVRRFLDENAFLDIETPVLTKATPEGARDYLVPSRVHKGSFYALPQSPQLFKQLLMMSGFDRYYQIVKCFRDEDLRADRQPEFTQIDIETSFMSAEQVREITEKMITEMWKELLNVDLGTFPIMQFEEALRRFGSDKPDLRNPLELVDVADILKDVDFKVFSGPANDEKGRVAVIRVPGGASLSRKQIDEYTKFVGIYGAKGLAWMKVNDREAGFAGVQSPVAKFLNEDVVANLLDRTQAETGDIILFGADSKRVVTEALGALRLKLGEDLELTDKSIWKPLWVIDFPMFEEDGEGNLHAMHHPFTSPLGITAEELAVNPAAANSNAYDMVINGYEVGGGSVRIHNADMQSAVFNILGIEEGEQQSKFGFLLEALKYGTPPHAGLAFGLDRLVMLLCGTDNIRDVIAFPKTTAASCLLTNAPSLANPDSLKELSIAVAIAKKETAKEESAE.

Residue Glu-171 participates in L-aspartate binding. The segment at 195–198 (QLFK) is aspartate. An L-aspartate-binding site is contributed by Arg-217. ATP-binding positions include 217 to 219 (RDE) and Gln-226. Residue His-448 coordinates L-aspartate. Residue Glu-482 participates in ATP binding. Residue Arg-489 participates in L-aspartate binding. 534–537 (GLDR) lines the ATP pocket.

This sequence belongs to the class-II aminoacyl-tRNA synthetase family. Type 1 subfamily. Homodimer.

The protein resides in the cytoplasm. The catalysed reaction is tRNA(Asp) + L-aspartate + ATP = L-aspartyl-tRNA(Asp) + AMP + diphosphate. Functionally, catalyzes the attachment of L-aspartate to tRNA(Asp) in a two-step reaction: L-aspartate is first activated by ATP to form Asp-AMP and then transferred to the acceptor end of tRNA(Asp). The chain is Aspartate--tRNA ligase from Photobacterium profundum (strain SS9).